The following is a 499-amino-acid chain: Probable cytosol aminopeptidase (499 aa).

Mn(2+)-binding residues include K269 and D274. The active site involves K281. Residues D292, D351, and E353 each coordinate Mn(2+). R355 is an active-site residue.

Belongs to the peptidase M17 family. Mn(2+) serves as cofactor.

Its subcellular location is the cytoplasm. The enzyme catalyses Release of an N-terminal amino acid, Xaa-|-Yaa-, in which Xaa is preferably Leu, but may be other amino acids including Pro although not Arg or Lys, and Yaa may be Pro. Amino acid amides and methyl esters are also readily hydrolyzed, but rates on arylamides are exceedingly low.. The catalysed reaction is Release of an N-terminal amino acid, preferentially leucine, but not glutamic or aspartic acids.. Presumably involved in the processing and regular turnover of intracellular proteins. Catalyzes the removal of unsubstituted N-terminal amino acids from various peptides. The polypeptide is Probable cytosol aminopeptidase (Actinobacillus pleuropneumoniae serotype 7 (strain AP76)).